The sequence spans 314 residues: 1-aminocyclopropane-1-carboxylate oxidase 1 (314 aa).

In terms of domain architecture, Fe2OG dioxygenase spans 153-253; the sequence is PNFGTKVSNY…RMSIASFYNP (101 aa). Residues His177, Asp179, and His234 each contribute to the Fe cation site.

The protein belongs to the iron/ascorbate-dependent oxidoreductase family. In terms of assembly, monomer. The cofactor is Fe cation.

The enzyme catalyses 1-aminocyclopropane-1-carboxylate + L-ascorbate + O2 = ethene + L-dehydroascorbate + hydrogen cyanide + CO2 + 2 H2O. The protein operates within alkene biosynthesis; ethylene biosynthesis via S-adenosyl-L-methionine; ethylene from S-adenosyl-L-methionine: step 2/2. This Malus domestica (Apple) protein is 1-aminocyclopropane-1-carboxylate oxidase 1.